The primary structure comprises 45 residues: Large ribosomal subunit protein bL34c (45 aa).

Belongs to the bacterial ribosomal protein bL34 family.

It is found in the plastid. The protein localises to the chloroplast. In Emiliania huxleyi (Coccolithophore), this protein is Large ribosomal subunit protein bL34c.